A 137-amino-acid polypeptide reads, in one-letter code: Actin-depolymerizing factor 12 (137 aa).

Ser6 carries the post-translational modification Phosphoserine. The region spanning 7 to 137 (GMAVEDECKL…SLDIIKSRAL (131 aa)) is the ADF-H domain.

This sequence belongs to the actin-binding proteins ADF family. Specifically expressed in pollen.

Its subcellular location is the cytoplasm. The protein resides in the cytoskeleton. Actin-depolymerizing protein. Severs actin filaments (F-actin) and binds to actin monomers. The polypeptide is Actin-depolymerizing factor 12 (Arabidopsis thaliana (Mouse-ear cress)).